We begin with the raw amino-acid sequence, 472 residues long: Glutamyl-tRNA(Gln) amidotransferase subunit A (472 aa).

Catalysis depends on charge relay system residues Lys-69 and Ser-144. Catalysis depends on Ser-168, which acts as the Acyl-ester intermediate.

This sequence belongs to the amidase family. GatA subfamily. As to quaternary structure, heterotrimer of A, B and C subunits.

It carries out the reaction L-glutamyl-tRNA(Gln) + L-glutamine + ATP + H2O = L-glutaminyl-tRNA(Gln) + L-glutamate + ADP + phosphate + H(+). Its function is as follows. Allows the formation of correctly charged Gln-tRNA(Gln) through the transamidation of misacylated Glu-tRNA(Gln) in organisms which lack glutaminyl-tRNA synthetase. The reaction takes place in the presence of glutamine and ATP through an activated gamma-phospho-Glu-tRNA(Gln). The sequence is that of Glutamyl-tRNA(Gln) amidotransferase subunit A from Sulfurisphaera tokodaii (strain DSM 16993 / JCM 10545 / NBRC 100140 / 7) (Sulfolobus tokodaii).